A 230-amino-acid chain; its full sequence is Orotidine 5'-phosphate decarboxylase (230 aa).

Residues aspartate 11, lysine 34, 61-70 (DLKLHDIPNT), threonine 117, arginine 179, glutamine 188, glycine 208, and arginine 209 contribute to the substrate site. Catalysis depends on lysine 63, which acts as the Proton donor.

The protein belongs to the OMP decarboxylase family. Type 1 subfamily. Homodimer.

It carries out the reaction orotidine 5'-phosphate + H(+) = UMP + CO2. It functions in the pathway pyrimidine metabolism; UMP biosynthesis via de novo pathway; UMP from orotate: step 2/2. Catalyzes the decarboxylation of orotidine 5'-monophosphate (OMP) to uridine 5'-monophosphate (UMP). The chain is Orotidine 5'-phosphate decarboxylase from Streptococcus equi subsp. zooepidemicus (strain H70).